The sequence spans 496 residues: Sodium/sialic acid symporter SiaT (496 aa).

Residues 1-7 (MQLHDFG) are Periplasmic-facing. A helical membrane pass occupies residues 8–29 (FINYAVLFGYLAAMLLVGVYFS). Residues 30–46 (KRQKTADDYFRGGGRVP) lie on the Cytoplasmic side of the membrane. A helical membrane pass occupies residues 47–59 (GWAAGVSVFATTL). Ala-56 contacts Na(+). Thr-58 contacts N-acetyl-alpha-neuraminate. A Na(+)-binding site is contributed by Leu-59. N-acetyl-alpha-neuraminate-binding residues include Ser-60, Thr-63, and Gln-82. Residues 60–76 (SSITFMSIPAKAYTSDW) lie on the Periplasmic side of the membrane. The chain crosses the membrane as a helical span at residues 77-92 (TFIIGQYLAIAILPLV). Over 93-116 (FYFYIPFFRKLKITSAYEYLEARF) the chain is Cytoplasmic. Residues 117–144 (DVRSRLFASLSFMLFHIGRVAIITYLTV) form a helical membrane-spanning segment. Residue Arg-135 participates in N-acetyl-alpha-neuraminate binding. Topologically, residues 145–154 (LALRPFMGID) are periplasmic. A helical membrane pass occupies residues 155 to 172 (PVVLIVLISLLCIIYTWM). Residues 173–174 (GG) lie on the Cytoplasmic side of the membrane. Residues 175–199 (IEGVIWTDVIQGLLLSGGAVLIFIM) traverse the membrane as a helical segment. A Na(+)-binding site is contributed by Asp-182. The Periplasmic portion of the chain corresponds to 200–235 (ICFKVDGGISEIFTTTAQADKFFPTTQWRWSWTDST). A helical transmembrane segment spans residues 236–252 (IPVLMIGFLFANIQQFT). Residues 253 to 272 (ASQDVVQRYIVTDSIKETKR) are Cytoplasmic-facing. A helical transmembrane segment spans residues 273–292 (TLITNAKLVAIIPIFFFAIG). At 293 to 325 (SALFVYYQQNPSLLPAGFNTGGILPLFIVTEMP) the chain is on the periplasmic side. Residues 326 to 356 (IGIAGLIIAAIFAAAQSSISSSLNSISSCFN) form a helical membrane-spanning segment. The Na(+) site is built by Ala-339, Ser-342, Ser-343, Ser-345, and Ser-346. The Cytoplasmic portion of the chain corresponds to 357–374 (SDIYTRLSKSSPSPEQKM). Residues 375–396 (KVAKLVIIVAGIFSSLAAIWLV) traverse the membrane as a helical segment. Residues 397-403 (LSDEAEI) lie on the Periplasmic side of the membrane. A helical transmembrane segment spans residues 404-427 (WDAFNSLIGLMGGPMTGLFMLGIF). Residues 428–432 (VKRAN) lie on the Cytoplasmic side of the membrane. The helical transmembrane segment at 433–453 (AGSAVVGIIVSIIAVLAARYG) threads the bilayer. Residues 454–457 (SDLN) are Periplasmic-facing. A helical membrane pass occupies residues 458-479 (FFFYGVIGSMSVVIAGTITAPL). The Cytoplasmic portion of the chain corresponds to 480 to 496 (FAPAKQLSLDDSETSEN).

This sequence belongs to the sodium:solute symporter (SSF) (TC 2.A.21) family.

It is found in the cell inner membrane. It catalyses the reaction N-acetyl-alpha-neuraminate(out) + 2 Na(+)(out) = N-acetyl-alpha-neuraminate(in) + 2 Na(+)(in). With respect to regulation, both Na(+) sites regulate Neu5Ac transport. The binding energy of the second Na(+) ion may be used to allosterically stabilize the substrate without directly coordinating it. In the absence of external Na(+), the rate is reduced by 78%. Its function is as follows. Symporter that uses the Na(+) gradient as the driving force for the uptake of the sialic acid N-acetylneuraminic acid (Neu5Ac). It allows the use of host-derived Neu5Ac as an energy source by P.mirabilis. Also binds N-glycolylneuraminic acid (Neu5Gc) and ketodeoxynonulosonic acid (KDN). Shows the highest affinity for Neu5Ac and Neu5Gc, which commonly occupy the terminal non-reducing position of mammalian cell surface glycoconjugates. The protein is Sodium/sialic acid symporter SiaT of Proteus mirabilis (strain HI4320).